A 445-amino-acid polypeptide reads, in one-letter code: Secretin receptor (445 aa).

Residues 1–21 (MCPRPGPPLGLWLLLGFACAA) form the signal peptide. Residues 22-137 (HLVGAPPRLC…HERQHAYLLK (116 aa)) are Extracellular-facing. Intrachain disulfides connect C44-C71, C62-C103, and C85-C119. N68, N96, N102, and N124 each carry an N-linked (GlcNAc...) asparagine glycan. Residues 138–163 (LKVMYTVGYSSSLVMLLVALGILCAF) traverse the membrane as a helical segment. The Cytoplasmic segment spans residues 164–170 (RRLHCTR). A helical membrane pass occupies residues 171–191 (NYIHMHLFLSFILRALSNFIK). At 192–212 (DAVLFSSDDAIHCDAHRVGCK) the chain is on the extracellular side. The cysteines at positions 211 and 281 are disulfide-linked. The helical transmembrane segment at 213 to 235 (LVMVFFQYCIMANYAWLLVEGLY) threads the bilayer. At 236–250 (LHSLLVVSFFSERKC) the chain is on the cytoplasmic side. A helical transmembrane segment spans residues 251 to 272 (LQGFVVLGWGSPAMFVTSWAVT). Over 273-287 (RHFLEDSGCWDINAN) the chain is Extracellular. A helical transmembrane segment spans residues 288-311 (AAIWWVIRGPVILSILINFILFIN). At 312-336 (ILRILTRKLRTQETRGQDMNHYKRL) the chain is on the cytoplasmic side. The chain crosses the membrane as a helical span at residues 337 to 352 (ARSTLLLIPLFGVHYI). The Extracellular portion of the chain corresponds to 353-363 (VFVFSPEGAME). Residues 364 to 387 (IQLFFELALGSFQGLVVAVLYCFL) form a helical membrane-spanning segment. The Cytoplasmic segment spans residues 388–445 (NGEVQLEVQKKWQQWHLWEPPLCPVALSSSFSNGTSSLNSTKACPSGRSRDTCKVSII).

This sequence belongs to the G-protein coupled receptor 2 family. In terms of processing, phosphorylated on Ser and Thr residues at the cytoplasmic C-terminus by G protein-coupled receptor kinases (GRKs).

It localises to the cell membrane. The protein resides in the basolateral cell membrane. In terms of biological role, g protein-coupled receptor activated by secretin (SCT), which is involved in different processes such as regulation of the pH of the duodenal content, food intake and water homeostasis. Ligand binding causes a conformation change that triggers signaling via guanine nucleotide-binding proteins (G proteins) and activates cAMP-dependent pathway. Upon binding to secretin, regulates the pH of the duodenum by (1) inhibiting the secretion of gastric acid from the parietal cells of the stomach and (2) stimulating the production of bicarbonate (NaHCO(3)) from the ductal cells of the pancreas. In addition to regulating the pH of the duodenal content, plays a central role in diet induced thermogenesis: acts as a non-sympathetic brown fat (BAT) activator mediating prandial thermogenesis, which consequentially induces satiation. Mechanistically, secretin released by the gut after a meal binds to secretin receptor (SCTR) in brown adipocytes, activating brown fat thermogenesis by stimulating lipolysis, which is sensed in the brain and promotes satiation. Also able to stimulate lipolysis in white adipocytes. Also plays an important role in cellular osmoregulation by regulating renal water reabsorption. Also plays a role in the central nervous system: required for synaptic plasticity. In Oryctolagus cuniculus (Rabbit), this protein is Secretin receptor (SCTR).